The sequence spans 623 residues: Stretch-activated cation channel MID1 (623 aa).

The Extracellular portion of the chain corresponds to 1 to 57 (MPAREVYLKRPATRRQLEGICTRYDGQQRITQLDCEEGCSKRTQPPQRLNPRYKSPD). A helical membrane pass occupies residues 58–78 (LIHISFIIVLLCILSMTSSVV). Over 79–623 (AQTTTGSSSS…DRWGNRWCNG (545 aa)) the chain is Cytoplasmic. A compositionally biased stretch (low complexity) spans 524–536 (TSTSSGTFPTPST). Residues 524–544 (TSTSSGTFPTPSTVLRTPSSP) are disordered. The required for targeting to the cell membrane stretch occupies residues 600–623 (SYGDGSAAQGVAAQDRWGNRWCNG).

As to quaternary structure, forms an oligomer by disulfide bonds. Interacts with CCH1 to form a Ca(2+) influx channel. Interacts (via C-terminus) with CCP1/cytochrome c peroxidase; the interaction may contribute to cellular detoxification of radicals.

It localises to the cell membrane. In terms of biological role, calcium-permeable, cation-selective stretch-activated channel (SAC) that functions together with CCH1 to mediate calcium entry into cells. May additionally play a role in cellular detoxification of radicals. The polypeptide is Stretch-activated cation channel MID1 (Cryptococcus neoformans var. grubii serotype A (strain H99 / ATCC 208821 / CBS 10515 / FGSC 9487) (Filobasidiella neoformans var. grubii)).